Reading from the N-terminus, the 534-residue chain is Probable protein kinase UbiB (534 aa).

Residues 23–43 (DLLFALPLPWFLLAVRYVLPW) form a helical membrane-spanning segment. The Protein kinase domain occupies 125–492 (RFDVDPLASA…WKKRKDDWFL (368 aa)). Residues 131–139 (LASASVAQV) and Lys153 each bind ATP. The active-site Proton acceptor is the Asp288. 2 helical membrane-spanning segments follow: residues 490-510 (WFLR…AIGG) and 512-532 (LNQL…YLIV).

The protein belongs to the ABC1 family. UbiB subfamily.

It is found in the cell inner membrane. Its pathway is cofactor biosynthesis; ubiquinone biosynthesis [regulation]. Its function is as follows. Is probably a protein kinase regulator of UbiI activity which is involved in aerobic coenzyme Q (ubiquinone) biosynthesis. This is Probable protein kinase UbiB from Pseudomonas fluorescens (strain SBW25).